The primary structure comprises 357 residues: GTPase Obg (357 aa).

The Obg domain maps to methionine 1–leucine 159. In terms of domain architecture, OBG-type G spans alanine 160 to glutamate 343. Residues glycine 166 to serine 173, phenylalanine 191 to tyrosine 195, aspartate 213 to glycine 216, asparagine 293 to aspartate 296, and serine 324 to valine 326 each bind GTP. Mg(2+)-binding residues include serine 173 and threonine 193.

Belongs to the TRAFAC class OBG-HflX-like GTPase superfamily. OBG GTPase family. As to quaternary structure, monomer. Mg(2+) serves as cofactor.

It localises to the cytoplasm. An essential GTPase which binds GTP, GDP and possibly (p)ppGpp with moderate affinity, with high nucleotide exchange rates and a fairly low GTP hydrolysis rate. Plays a role in control of the cell cycle, stress response, ribosome biogenesis and in those bacteria that undergo differentiation, in morphogenesis control. The chain is GTPase Obg from Xylella fastidiosa (strain 9a5c).